We begin with the raw amino-acid sequence, 146 residues long: Acetyl-CoA decarbonylase/synthase complex subunit epsilon (146 aa).

It belongs to the CdhB family. Heterotetramer of two alpha and two epsilon subunits. The ACDS complex is made up of alpha, epsilon, beta, gamma and delta subunits with a probable stoichiometry of (alpha(2)epsilon(2))(4)-beta(8)-(gamma(1)delta(1))(8).

In terms of biological role, part of a complex that catalyzes the reversible cleavage of acetyl-CoA, allowing autotrophic growth from CO(2). The alpha-epsilon subcomponent functions as a carbon monoxide dehydrogenase. The precise role of the epsilon subunit is unclear; it may have a stabilizing role within the alpha(2)epsilon(2) component and/or be involved in electron transfer to FAD during a potential FAD-mediated CO oxidation. This Methanocaldococcus jannaschii (strain ATCC 43067 / DSM 2661 / JAL-1 / JCM 10045 / NBRC 100440) (Methanococcus jannaschii) protein is Acetyl-CoA decarbonylase/synthase complex subunit epsilon.